Reading from the N-terminus, the 1316-residue chain is MLDVNFFDELRIGLATAEDIRQWSYGEVKKPETINYRTLKPEKDGLFCEKIFGPTRDWECYCGKYKRVRFKGIICERCGVEVTRAKVRRERMGHIELAAPVTHIWYFKGVPSRLGYLLDLAPKDLEKIIYFAAYVITSVDEEMRHNELSTLEAEMAVERKAVEDQRDGELEARAQKLEADLAELEAEGAKADARRKVRDGGEREMRQIRDRAQRELDRLEDIWSTFTKLAPKQLIVDENLYRELVDRYGEYFTGAMGAESIQKLIENFDIDAEAESLRDVIRNGKGQKKLRALKRLKVVAAFQQSGNSPMGMVLDAVPVIPPELRPMVQLDGGRFATSDLNDLYRRVINRNNRLKRLIDLGAPEIIVNNEKRMLQESVDALFDNGRRGRPVTGPGNRPLKSLSDLLKGKQGRFRQNLLGKRVDYSGRSVIVVGPQLKLHQCGLPKLMALELFKPFVMKRLVDLNHAQNIKSAKRMVERQRPQVWDVLEEVIAEHPVLLNRAPTLHRLGIQAFEPMLVEGKAIQLHPLVCEAFNADFDGDQMAVHLPLSAEAQAEARILMLSSNNILSPASGRPLAMPRLDMVTGLYYLTTEVPGDTGEYQPASGDHPETGVYSSPAEAIMAADRGVLSVRAKIKVRLTQLRPPVEIEAELFGHSGWQPGDAWMAETTLGRVMFNELLPLGYPFVNKQMHKKVQAAIINDLAERYPMIVVAQTVDKLKDAGFYWATRSGVTVSMADVLVPPRKKEILDHYEERADKVEKQFQRGALNHDERNEALVEIWKEATDEVGQALREHYPDDNPIITIVDSGATGNFTQTRTLAGMKGLVTNPKGEFIPRPVKSSFREGLTVLEYFINTHGARKGLADTALRTADSGYLTRRLVDVSQDVIVREHDCQTERGIVVELAERAPDGTLIRDPYIETSAYARTLGTDAVDEAGNVIVERGQDLGDPEIDALLAAGITQVKVRSVLTCATSTGVCATCYGRSMATGKLVDIGEAVGIVAAQSIGEPGTQLTMRTFHQGGVGEDITGGLPRVQELFEARVPRGKAPIADVTGRVRLEDGERFYKITIVPDDGGEEVVYDKISKRQRLRVFKHEDGSERVLSDGDHVEVGQQLMEGSADPHEVLRVQGPREVQIHLVREVQEVYRAQGVSIHDKHIEVIVRQMLRRVTIIDSGSTEFLPGSLIDRAEFEAENRRVVAEGGEPAAGRPVLMGITKASLATDSWLSAASFQETTRVLTDAAINCRSDKLNGLKENVIIGKLIPAGTGINRYRNIAVQPTEEARAAAYTIPSYEDQYYSPDFGAATGAAVPLDDYGYSDYR.

Zn(2+) contacts are provided by Cys-60, Cys-62, Cys-75, and Cys-78. Residues Asp-535, Asp-537, and Asp-539 each coordinate Mg(2+). Zn(2+)-binding residues include Cys-891, Cys-968, Cys-975, and Cys-978.

It belongs to the RNA polymerase beta' chain family. As to quaternary structure, the RNAP catalytic core consists of 2 alpha, 1 beta, 1 beta' and 1 omega subunit. When a sigma factor is associated with the core the holoenzyme is formed, which can initiate transcription. Mg(2+) is required as a cofactor. It depends on Zn(2+) as a cofactor.

The enzyme catalyses RNA(n) + a ribonucleoside 5'-triphosphate = RNA(n+1) + diphosphate. Its function is as follows. DNA-dependent RNA polymerase catalyzes the transcription of DNA into RNA using the four ribonucleoside triphosphates as substrates. This chain is DNA-directed RNA polymerase subunit beta', found in Mycobacterium tuberculosis (strain ATCC 25177 / H37Ra).